Reading from the N-terminus, the 150-residue chain is Large ribosomal subunit protein uL15 (150 aa).

Residues 1–55 (MADNEILQMHDLKPAPGAKKDRTRVGRGEGSKGKTAGRGAKGQTKRNHVRPGFEG) form a disordered region. Positions 8-32 (QMHDLKPAPGAKKDRTRVGRGEGSK) are enriched in basic and acidic residues.

This sequence belongs to the universal ribosomal protein uL15 family. In terms of assembly, part of the 50S ribosomal subunit.

Its function is as follows. Binds to the 23S rRNA. This Bifidobacterium longum (strain DJO10A) protein is Large ribosomal subunit protein uL15.